A 363-amino-acid chain; its full sequence is Bonnadiene synthase (363 aa).

Mg(2+) is bound by residues D93, D98, N234, S238, and E242.

This sequence belongs to the terpene synthase family. Mg(2+) is required as a cofactor.

The enzyme catalyses (2E,6E,10E)-geranylgeranyl diphosphate = bonnadiene + diphosphate. The protein operates within secondary metabolite biosynthesis; terpenoid biosynthesis. Diterpene synthase that catalyzes the conversion of geranylgeranyl diphosphate (GGPP) to bonnadiene. Cannot use geranyl diphosphate (GPP), farnesyl diphosphate (FPP) and geranylfarnesyl diphosphate (GFPP). This is Bonnadiene synthase from Allokutzneria albata (Kibdelosporangium albatum).